A 1823-amino-acid polypeptide reads, in one-letter code: WD repeat-containing protein DDB_G0292056 (1823 aa).

The interval 1 to 68 (MTYNNNNNYL…IGNSSGGGGV (68 aa)) is disordered. The segment covering 16 to 61 (TSTSTSTSTSTPTSTKTSPLNTSSSSNILKSNSRNPSPNNPTNIGN) has biased composition (low complexity). 6 WD repeats span residues 138–177 (QSKW…YPLL), 182–222 (SHQR…KAVK), 228–267 (SHIL…QELN), 270–310 (VHSA…PKST), 312–354 (ITSN…YSTP), and 360–405 (GHTD…KDLF). Disordered regions lie at residues 418–461 (PTTT…LLST), 530–562 (QPDD…NNNN), 649–687 (NITE…GFLK), 714–778 (IDIS…YRPG), 805–840 (ILTN…TNDQ), 883–940 (IPNN…SSTS), 966–996 (SSSS…NPPR), 1014–1058 (NNIT…NDNP), and 1122–1186 (QQLV…NGKS). 2 stretches are compositionally biased toward low complexity: residues 419-432 (TTTT…TTTT) and 440-461 (LNES…LLST). Composition is skewed to low complexity over residues 654-680 (NNNN…NNNN) and 717-748 (SQQQ…QQQQ). Polar residues-rich tracts occupy residues 749–768 (FLTA…SPTS) and 827–840 (MNAS…TNDQ). Composition is skewed to low complexity over residues 885–926 (NNNK…SSNN), 966–993 (SSSS…KNIN), 1014–1041 (NNIT…NRLN), and 1127–1183 (SSSP…NNGN). Residues 1207-1250 (ANSYILSGKPVEEICKYNSELAEKENRKDLVKLWNTLGMITDSK) form a WD 7 repeat. 3 disordered regions span residues 1264-1307 (SHFG…LHQS), 1697-1725 (QQQP…HTHN), and 1764-1823 (PQQE…MFSN). Positions 1282–1293 (STGIASSTGSNS) are enriched in low complexity. Over residues 1710–1725 (MSGTSHYHQQQPHTHN) the composition is skewed to polar residues.

The sequence is that of WD repeat-containing protein DDB_G0292056 from Dictyostelium discoideum (Social amoeba).